The following is a 421-amino-acid chain: UDP-N-acetylglucosamine 1-carboxyvinyltransferase (421 aa).

22-23 (KN) is a phosphoenolpyruvate binding site. Residue Arg93 participates in UDP-N-acetyl-alpha-D-glucosamine binding. Cys117 (proton donor) is an active-site residue. Cys117 is modified (2-(S-cysteinyl)pyruvic acid O-phosphothioketal). UDP-N-acetyl-alpha-D-glucosamine contacts are provided by residues 122-126 (RPVDL), Asp308, and Ile330.

It belongs to the EPSP synthase family. MurA subfamily.

The protein localises to the cytoplasm. The enzyme catalyses phosphoenolpyruvate + UDP-N-acetyl-alpha-D-glucosamine = UDP-N-acetyl-3-O-(1-carboxyvinyl)-alpha-D-glucosamine + phosphate. The protein operates within cell wall biogenesis; peptidoglycan biosynthesis. Cell wall formation. Adds enolpyruvyl to UDP-N-acetylglucosamine. The chain is UDP-N-acetylglucosamine 1-carboxyvinyltransferase from Pseudomonas fluorescens (strain Pf0-1).